A 336-amino-acid chain; its full sequence is Ketol-acid reductoisomerase (NADP(+)) 1 (336 aa).

A KARI N-terminal Rossmann domain is found at 2 to 181; sequence AKVYYEKDVT…GATRAGVLET (180 aa). NADP(+) contacts are provided by residues 25-28, Arg-48, Ser-52, and 82-85; these read YGSQ and DELQ. His-107 is a catalytic residue. NADP(+) is bound at residue Gly-133. One can recognise a KARI C-terminal knotted domain in the interval 182–327; the sequence is TFKEETETDL…RKLREMMPFV (146 aa). Mg(2+)-binding residues include Asp-190, Glu-194, Glu-226, and Glu-230. Ser-251 serves as a coordination point for substrate.

The protein belongs to the ketol-acid reductoisomerase family. Requires Mg(2+) as cofactor.

The catalysed reaction is (2R)-2,3-dihydroxy-3-methylbutanoate + NADP(+) = (2S)-2-acetolactate + NADPH + H(+). The enzyme catalyses (2R,3R)-2,3-dihydroxy-3-methylpentanoate + NADP(+) = (S)-2-ethyl-2-hydroxy-3-oxobutanoate + NADPH + H(+). It participates in amino-acid biosynthesis; L-isoleucine biosynthesis; L-isoleucine from 2-oxobutanoate: step 2/4. The protein operates within amino-acid biosynthesis; L-valine biosynthesis; L-valine from pyruvate: step 2/4. In terms of biological role, involved in the biosynthesis of branched-chain amino acids (BCAA). Catalyzes an alkyl-migration followed by a ketol-acid reduction of (S)-2-acetolactate (S2AL) to yield (R)-2,3-dihydroxy-isovalerate. In the isomerase reaction, S2AL is rearranged via a Mg-dependent methyl migration to produce 3-hydroxy-3-methyl-2-ketobutyrate (HMKB). In the reductase reaction, this 2-ketoacid undergoes a metal-dependent reduction by NADPH to yield (R)-2,3-dihydroxy-isovalerate. In Bacillus cereus (strain ZK / E33L), this protein is Ketol-acid reductoisomerase (NADP(+)) 1.